The chain runs to 201 residues: Putative amino-acid transporter Mb0498 (201 aa).

5 consecutive transmembrane segments (helical) span residues Val25–Gly45, Met57–Ala77, Leu104–Leu124, Trp133–Ser153, and Ile169–Ser189.

The protein belongs to the LysE/ArgO transporter (TC 2.A.75) family.

It localises to the cell membrane. This Mycobacterium bovis (strain ATCC BAA-935 / AF2122/97) protein is Putative amino-acid transporter Mb0498.